A 169-amino-acid chain; its full sequence is 2-C-methyl-D-erythritol 2,4-cyclodiphosphate synthase (169 aa).

Residues D13 and H15 each contribute to the a divalent metal cation site. Residues D13 to H15 and H39 to S40 contribute to the 4-CDP-2-C-methyl-D-erythritol 2-phosphate site. H47 is a binding site for a divalent metal cation. 4-CDP-2-C-methyl-D-erythritol 2-phosphate is bound by residues D61 to G63, F66 to D70, F144, and R147.

The protein belongs to the IspF family. In terms of assembly, homotrimer. A divalent metal cation is required as a cofactor.

The enzyme catalyses 4-CDP-2-C-methyl-D-erythritol 2-phosphate = 2-C-methyl-D-erythritol 2,4-cyclic diphosphate + CMP. It functions in the pathway isoprenoid biosynthesis; isopentenyl diphosphate biosynthesis via DXP pathway; isopentenyl diphosphate from 1-deoxy-D-xylulose 5-phosphate: step 4/6. In terms of biological role, involved in the biosynthesis of isopentenyl diphosphate (IPP) and dimethylallyl diphosphate (DMAPP), two major building blocks of isoprenoid compounds. Catalyzes the conversion of 4-diphosphocytidyl-2-C-methyl-D-erythritol 2-phosphate (CDP-ME2P) to 2-C-methyl-D-erythritol 2,4-cyclodiphosphate (ME-CPP) with a corresponding release of cytidine 5-monophosphate (CMP). The protein is 2-C-methyl-D-erythritol 2,4-cyclodiphosphate synthase of Cupriavidus necator (strain ATCC 17699 / DSM 428 / KCTC 22496 / NCIMB 10442 / H16 / Stanier 337) (Ralstonia eutropha).